We begin with the raw amino-acid sequence, 61 residues long: uncharacterized protein (61 aa).

A disordered region spans residues 1 to 40; it reads MRRGGEPQCDGREFRIASSPAREREDDNETAPPQTSAAQE. The span at 9–25 shows a compositional bias: basic and acidic residues; sequence CDGREFRIASSPARERE.

This is an uncharacterized protein from Caenorhabditis elegans.